Reading from the N-terminus, the 105-residue chain is Small ribosomal subunit protein uS10 (105 aa).

This sequence belongs to the universal ribosomal protein uS10 family. Part of the 30S ribosomal subunit.

Its function is as follows. Involved in the binding of tRNA to the ribosomes. The polypeptide is Small ribosomal subunit protein uS10 (Chlamydia abortus (strain DSM 27085 / S26/3) (Chlamydophila abortus)).